The primary structure comprises 598 residues: Membrane protein insertase YidC (598 aa).

A helical transmembrane segment spans residues 7 to 27; the sequence is NYFIAIALSVLIVLGWQFLYM. A disordered region spans residues 37–76; sequence AQEAQKAQQQTEQVQQPAAGGQTPAQTSGAAPSGQAAATA. A compositionally biased stretch (low complexity) spans 40 to 76; it reads AQKAQQQTEQVQQPAAGGQTPAQTSGAAPSGQAAATA. The next 4 helical transmembrane spans lie at 377–397, 447–467, 492–512, and 538–558; these read FGVA…PLAS, WPVA…YITI, LFGL…WPLI, and WMPL…VIYW.

Belongs to the OXA1/ALB3/YidC family. Type 1 subfamily. As to quaternary structure, interacts with the Sec translocase complex via SecD. Specifically interacts with transmembrane segments of nascent integral membrane proteins during membrane integration.

The protein resides in the cell inner membrane. Its function is as follows. Required for the insertion and/or proper folding and/or complex formation of integral membrane proteins into the membrane. Involved in integration of membrane proteins that insert both dependently and independently of the Sec translocase complex, as well as at least some lipoproteins. Aids folding of multispanning membrane proteins. This chain is Membrane protein insertase YidC, found in Rhizobium johnstonii (strain DSM 114642 / LMG 32736 / 3841) (Rhizobium leguminosarum bv. viciae).